We begin with the raw amino-acid sequence, 273 residues long: Bis(5'-nucleosyl)-tetraphosphatase, symmetrical (273 aa).

It belongs to the Ap4A hydrolase family.

The catalysed reaction is P(1),P(4)-bis(5'-adenosyl) tetraphosphate + H2O = 2 ADP + 2 H(+). In terms of biological role, hydrolyzes diadenosine 5',5'''-P1,P4-tetraphosphate to yield ADP. This Aliivibrio salmonicida (strain LFI1238) (Vibrio salmonicida (strain LFI1238)) protein is Bis(5'-nucleosyl)-tetraphosphatase, symmetrical.